The chain runs to 208 residues: UPF0316 protein SERP1448 (208 aa).

3 helical membrane-spanning segments follow: residues 8–28 (PWLM…FLTM), 40–60 (VAAV…GLVM), and 66–86 (IQNI…GMKI).

The protein belongs to the UPF0316 family.

It localises to the cell membrane. The chain is UPF0316 protein SERP1448 from Staphylococcus epidermidis (strain ATCC 35984 / DSM 28319 / BCRC 17069 / CCUG 31568 / BM 3577 / RP62A).